The following is a 120-amino-acid chain: Small ribosomal subunit protein eS24 (120 aa).

Residues arginine 101–glycine 120 form a disordered region.

It belongs to the eukaryotic ribosomal protein eS24 family.

The sequence is that of Small ribosomal subunit protein eS24 from Saccharolobus islandicus (strain M.16.4 / Kamchatka #3) (Sulfolobus islandicus).